The sequence spans 365 residues: tRNA/tmRNA (uracil-C(5))-methyltransferase (365 aa).

Positions 189, 217, 222, 238, and 298 each coordinate S-adenosyl-L-methionine. Cys-323 functions as the Nucleophile in the catalytic mechanism. Residue Glu-357 is the Proton acceptor of the active site.

This sequence belongs to the class I-like SAM-binding methyltransferase superfamily. RNA M5U methyltransferase family. TrmA subfamily.

The catalysed reaction is uridine(54) in tRNA + S-adenosyl-L-methionine = 5-methyluridine(54) in tRNA + S-adenosyl-L-homocysteine + H(+). It carries out the reaction uridine(341) in tmRNA + S-adenosyl-L-methionine = 5-methyluridine(341) in tmRNA + S-adenosyl-L-homocysteine + H(+). Functionally, dual-specificity methyltransferase that catalyzes the formation of 5-methyluridine at position 54 (m5U54) in all tRNAs, and that of position 341 (m5U341) in tmRNA (transfer-mRNA). The sequence is that of tRNA/tmRNA (uracil-C(5))-methyltransferase from Shewanella piezotolerans (strain WP3 / JCM 13877).